The chain runs to 199 residues: Recombination protein RecR (199 aa).

Residues 57–72 form a C4-type zinc finger; it reads CRQCRVLTEEPVCGLC. Positions 80–175 constitute a Toprim domain; it reads SLLCVVEGPA…RTTRIAHGVP (96 aa).

The protein belongs to the RecR family.

Its function is as follows. May play a role in DNA repair. It seems to be involved in an RecBC-independent recombinational process of DNA repair. It may act with RecF and RecO. The protein is Recombination protein RecR of Alkalilimnicola ehrlichii (strain ATCC BAA-1101 / DSM 17681 / MLHE-1).